Here is a 360-residue protein sequence, read N- to C-terminus: S-adenosylmethionine:tRNA ribosyltransferase-isomerase (360 aa).

This sequence belongs to the QueA family. Monomer.

The protein resides in the cytoplasm. The catalysed reaction is 7-aminomethyl-7-carbaguanosine(34) in tRNA + S-adenosyl-L-methionine = epoxyqueuosine(34) in tRNA + adenine + L-methionine + 2 H(+). It participates in tRNA modification; tRNA-queuosine biosynthesis. Its function is as follows. Transfers and isomerizes the ribose moiety from AdoMet to the 7-aminomethyl group of 7-deazaguanine (preQ1-tRNA) to give epoxyqueuosine (oQ-tRNA). In Rhodopseudomonas palustris (strain BisB5), this protein is S-adenosylmethionine:tRNA ribosyltransferase-isomerase.